The primary structure comprises 346 residues: tRNA N6-adenosine threonylcarbamoyltransferase (346 aa).

Residues H111 and H115 each contribute to the Fe cation site. Residues 134–138 (LVSGG), D167, G180, and N279 contribute to the substrate site. D307 is a Fe cation binding site.

This sequence belongs to the KAE1 / TsaD family. The cofactor is Fe(2+).

It localises to the cytoplasm. It carries out the reaction L-threonylcarbamoyladenylate + adenosine(37) in tRNA = N(6)-L-threonylcarbamoyladenosine(37) in tRNA + AMP + H(+). In terms of biological role, required for the formation of a threonylcarbamoyl group on adenosine at position 37 (t(6)A37) in tRNAs that read codons beginning with adenine. Is involved in the transfer of the threonylcarbamoyl moiety of threonylcarbamoyl-AMP (TC-AMP) to the N6 group of A37, together with TsaE and TsaB. TsaD likely plays a direct catalytic role in this reaction. The chain is tRNA N6-adenosine threonylcarbamoyltransferase from Burkholderia cenocepacia (strain ATCC BAA-245 / DSM 16553 / LMG 16656 / NCTC 13227 / J2315 / CF5610) (Burkholderia cepacia (strain J2315)).